A 420-amino-acid chain; its full sequence is Shaggy-related protein kinase delta (420 aa).

The tract at residues 1–61 (MESHLGNGVG…DIIDGVGAEP (61 aa)) is disordered. The segment covering 10–26 (GSSRSAKNTKNTSSSVD) has biased composition (polar residues). Basic and acidic residues predominate over residues 28-41 (LSRDMLEMKIRDKT). Residues 42–53 (EADEERDSEPDI) are compositionally biased toward acidic residues. The 285-residue stretch at 82–366 (YIAEHVVGTG…AVEACIHPFF (285 aa)) folds into the Protein kinase domain. Residues 88–96 (VGTGSFGMV) and Lys-111 each bind ATP. The active-site Proton acceptor is Asp-207. Tyr-242 is subject to Phosphotyrosine.

Belongs to the protein kinase superfamily. CMGC Ser/Thr protein kinase family. GSK-3 subfamily. Autophosphorylated mainly on threonine and serine residues.

It catalyses the reaction L-seryl-[protein] + ATP = O-phospho-L-seryl-[protein] + ADP + H(+). The enzyme catalyses L-threonyl-[protein] + ATP = O-phospho-L-threonyl-[protein] + ADP + H(+). Functionally, may mediate extracellular signals to regulate transcription in differentiating cells. The polypeptide is Shaggy-related protein kinase delta (ASK4) (Arabidopsis thaliana (Mouse-ear cress)).